Consider the following 95-residue polypeptide: Large ribosomal subunit protein bL25 (95 aa).

This sequence belongs to the bacterial ribosomal protein bL25 family. As to quaternary structure, part of the 50S ribosomal subunit; part of the 5S rRNA/L5/L18/L25 subcomplex. Contacts the 5S rRNA. Binds to the 5S rRNA independently of L5 and L18.

Functionally, this is one of the proteins that binds to the 5S RNA in the ribosome where it forms part of the central protuberance. The sequence is that of Large ribosomal subunit protein bL25 from Chromobacterium violaceum (strain ATCC 12472 / DSM 30191 / JCM 1249 / CCUG 213 / NBRC 12614 / NCIMB 9131 / NCTC 9757 / MK).